Reading from the N-terminus, the 837-residue chain is Phosphatidylinositol-glycan-specific phospholipase D (837 aa).

An N-terminal signal peptide occupies residues 1 to 23 (MSAGRLWSSLLLLLPLFCSKSSS). N-linked (GlcNAc...) asparagine glycosylation is found at asparagine 94, asparagine 267, asparagine 287, asparagine 303, and asparagine 317. FG-GAP repeat units lie at residues 364 to 425 (SPSA…GLPP), 431 to 492 (NKEG…GRLS), 494 to 554 (SPNV…RNDK), 561 to 619 (EADW…SLGK), 629 to 689 (QSTI…GATR), 701 to 767 (ALLS…TLGD), and 785 to 837 (QYVL…FSSD). Asparagine 477, asparagine 496, asparagine 586, asparagine 599, and asparagine 655 each carry an N-linked (GlcNAc...) asparagine glycan.

It belongs to the GPLD1 family. As to quaternary structure, monomer. Widely expressed.

Its subcellular location is the secreted. It catalyses the reaction a 6-(alpha-D-glucosaminyl)-1-(1,2-diacyl-sn-glycero-3-phospho)-1D-myo-inositol + H2O = 6-(alpha-D-glucosaminyl)-1D-myo-inositol + a 1,2-diacyl-sn-glycero-3-phosphate + H(+). This protein hydrolyzes the inositol phosphate linkage in proteins anchored by phosphatidylinositol glycans (GPI-anchor) thus releasing these proteins from the membrane. The protein is Phosphatidylinositol-glycan-specific phospholipase D (Gpld1) of Mus musculus (Mouse).